The primary structure comprises 83 residues: Conotoxin p21a (83 aa).

2 positions are modified to 4-hydroxyproline; partial: proline 24 and proline 43. Residue histidine 83 is modified to Histidine amide.

As to quaternary structure, may form a non-covalent dimer. Contains 5 disulfide bonds. In terms of tissue distribution, expressed by the venom duct.

It is found in the secreted. This is Conotoxin p21a from Conus purpurascens (Purple cone).